A 336-amino-acid chain; its full sequence is Cytoskeleton protein RodZ (336 aa).

Over 1-111 (MNTEATHDKT…LGKRRKKRDG (111 aa)) the chain is Cytoplasmic. In terms of domain architecture, HTH cro/C1-type spans 19–71 (LRNAREQLGLSQQAVAERLCLKVSTVRDIEEDKAPADLASTFLRGYIRSYAKL). A DNA-binding region (H-T-H motif) is located at residues 30–49 (QQAVAERLCLKVSTVRDIEE). Residues 112 to 132 (WLMSFTWLVLFVVIGLTGAWW) traverse the membrane as a helical; Signal-anchor for type II membrane protein segment. Residues 133 to 336 (WQNHKAQQEE…TVSAEQSAAQ (204 aa)) are Periplasmic-facing. Residues 152–164 (AALNNSGNNGAQS) are compositionally biased toward low complexity. The interval 152-235 (AALNNSGNNG…TTTGNVNVTQ (84 aa)) is disordered. 2 stretches are compositionally biased toward polar residues: residues 165-190 (VPLNTDSASTSSEPQTAETDSQTVEP) and 200-217 (PDQTAAQNAVVSPSQANV). Positions 220–235 (APAVTPTTTGNVNVTQ) are enriched in low complexity.

The protein belongs to the RodZ family.

It localises to the cell inner membrane. Functionally, cytoskeletal protein that is involved in cell-shape control through regulation of the length of the long axis. This Enterobacter sp. (strain 638) protein is Cytoskeleton protein RodZ.